A 297-amino-acid polypeptide reads, in one-letter code: Bifunctional protein FolD 1 (297 aa).

NADP(+) is bound by residues 174–176 (GRS), S199, and I240.

It belongs to the tetrahydrofolate dehydrogenase/cyclohydrolase family. In terms of assembly, homodimer.

It carries out the reaction (6R)-5,10-methylene-5,6,7,8-tetrahydrofolate + NADP(+) = (6R)-5,10-methenyltetrahydrofolate + NADPH. It catalyses the reaction (6R)-5,10-methenyltetrahydrofolate + H2O = (6R)-10-formyltetrahydrofolate + H(+). It functions in the pathway one-carbon metabolism; tetrahydrofolate interconversion. In terms of biological role, catalyzes the oxidation of 5,10-methylenetetrahydrofolate to 5,10-methenyltetrahydrofolate and then the hydrolysis of 5,10-methenyltetrahydrofolate to 10-formyltetrahydrofolate. This chain is Bifunctional protein FolD 1, found in Acinetobacter baylyi (strain ATCC 33305 / BD413 / ADP1).